A 706-amino-acid chain; its full sequence is DNA ligase (706 aa).

The interval Met1–Ala20 is disordered. NAD(+) is bound by residues Asp50–Asp54, Ser99–Leu100, and Glu128. The N6-AMP-lysine intermediate role is filled by Lys130. 4 residues coordinate NAD(+): Arg151, Glu188, Lys304, and Lys328. Residues Cys422, Cys425, Cys440, and Cys446 each contribute to the Zn(2+) site. The BRCT domain occupies Glu604–Pro694.

Belongs to the NAD-dependent DNA ligase family. LigA subfamily. Mg(2+) is required as a cofactor. The cofactor is Mn(2+).

It carries out the reaction NAD(+) + (deoxyribonucleotide)n-3'-hydroxyl + 5'-phospho-(deoxyribonucleotide)m = (deoxyribonucleotide)n+m + AMP + beta-nicotinamide D-nucleotide.. In terms of biological role, DNA ligase that catalyzes the formation of phosphodiester linkages between 5'-phosphoryl and 3'-hydroxyl groups in double-stranded DNA using NAD as a coenzyme and as the energy source for the reaction. It is essential for DNA replication and repair of damaged DNA. The sequence is that of DNA ligase from Frankia casuarinae (strain DSM 45818 / CECT 9043 / HFP020203 / CcI3).